The chain runs to 350 residues: MATTKLVYILLILFTFTVSPAISTAPEHCDSGFDNPCINKAKALPLKIVAIVAILTTSLIGVTSPLFSRYISFLRPDGNGFMIVKCFSSGIILGTGFMHVLPDSFEMLSSKCLSDNPWHKFPFAGFVAMMSGLVTLAIDSITTSLYTGKNSVGPVPDEEYGIDQEKAIHMVGHNHSHGHGVVLATKDDGQLLRYQVIAMVLEVGILFHSVVIGLSLGATNDSCTIKGLIIALCFHHLFEGIGLGGCILQADFTNVKKFLMAFFFTGTTPCGIFLGIALSSIYRDNSPTALITIGLLNACSAGMLIYMALVDLLATEFMGSMLQGSIKLQIKCFTAALLGCAVMSVVAVWA.

The signal sequence occupies residues 1 to 21 (MATTKLVYILLILFTFTVSPA). At 22 to 47 (ISTAPEHCDSGFDNPCINKAKALPLK) the chain is on the extracellular side. The chain crosses the membrane as a helical span at residues 48–68 (IVAIVAILTTSLIGVTSPLFS). The Cytoplasmic segment spans residues 69 to 80 (RYISFLRPDGNG). A helical membrane pass occupies residues 81-101 (FMIVKCFSSGIILGTGFMHVL). The Extracellular portion of the chain corresponds to 102–120 (PDSFEMLSSKCLSDNPWHK). A helical transmembrane segment spans residues 121–141 (FPFAGFVAMMSGLVTLAIDSI). The Cytoplasmic segment spans residues 142–195 (TTSLYTGKNSVGPVPDEEYGIDQEKAIHMVGHNHSHGHGVVLATKDDGQLLRYQ). Residues 196-216 (VIAMVLEVGILFHSVVIGLSL) form a helical membrane-spanning segment. At 217–227 (GATNDSCTIKG) the chain is on the extracellular side. The chain crosses the membrane as a helical span at residues 228-248 (LIIALCFHHLFEGIGLGGCIL). At 249 to 257 (QADFTNVKK) the chain is on the cytoplasmic side. Residues 258-278 (FLMAFFFTGTTPCGIFLGIAL) traverse the membrane as a helical segment. The Extracellular segment spans residues 279 to 289 (SSIYRDNSPTA). The chain crosses the membrane as a helical span at residues 290 to 310 (LITIGLLNACSAGMLIYMALV). At 311-329 (DLLATEFMGSMLQGSIKLQ) the chain is on the cytoplasmic side. Residues 330–350 (IKCFTAALLGCAVMSVVAVWA) traverse the membrane as a helical segment.

This sequence belongs to the ZIP transporter (TC 2.A.5) family. As to expression, expressed in the external cell layers of the root subapical zone.

The protein resides in the cell membrane. In terms of biological role, high-affinity iron transporter that mediates under iron-deficiency the iron uptake from the rhizosphere across the plasma membrane in the root epidermal layer. Could also be capable of transporting zinc ions. This chain is Fe(2+) transport protein 2 (IRT2), found in Arabidopsis thaliana (Mouse-ear cress).